The following is a 312-amino-acid chain: Acetaldehyde dehydrogenase 2 (312 aa).

11–14 (SGNI) lines the NAD(+) pocket. Cysteine 129 acts as the Acyl-thioester intermediate in catalysis. NAD(+) contacts are provided by residues 160–168 (SAGPGTRAN) and asparagine 287.

Belongs to the acetaldehyde dehydrogenase family.

The catalysed reaction is acetaldehyde + NAD(+) + CoA = acetyl-CoA + NADH + H(+). The protein is Acetaldehyde dehydrogenase 2 of Novosphingobium aromaticivorans (strain ATCC 700278 / DSM 12444 / CCUG 56034 / CIP 105152 / NBRC 16084 / F199).